Reading from the N-terminus, the 123-residue chain is Class I hydrophobin 2 (123 aa).

The N-terminal stretch at 1 to 16 is a signal peptide; sequence MYAYTVIAFLAASVAA. 4 disulfide bridges follow: C35–C97, C43–C91, C44–C72, and C98–C116.

Belongs to the fungal hydrophobin family.

Its subcellular location is the secreted. It localises to the cell wall. Its function is as follows. Aerial growth, conidiation, and dispersal of filamentous fungi in the environment rely upon a capability of their secreting small amphipathic proteins called hydrophobins (HPBs) with low sequence identity. Class I can self-assemble into an outermost layer of rodlet bundles on aerial cell surfaces, conferring cellular hydrophobicity that supports fungal growth, development and dispersal; whereas Class II form highly ordered films at water-air interfaces through intermolecular interactions but contribute nothing to the rodlet structure. HYD1 and HYD2 are required for the structural integrity of the long aerial chains of microconidia. Does not seem to be important for the ability to cause seedling disease. This is Class I hydrophobin 2 from Gibberella moniliformis (Maize ear and stalk rot fungus).